The primary structure comprises 327 residues: Replication factor C small subunit (327 aa).

47 to 54 (GPPGTGKT) contributes to the ATP binding site.

Belongs to the activator 1 small subunits family. RfcS subfamily. In terms of assembly, heteromultimer composed of small subunits (RfcS) and large subunits (RfcL).

Its function is as follows. Part of the RFC clamp loader complex which loads the PCNA sliding clamp onto DNA. The chain is Replication factor C small subunit from Sulfurisphaera tokodaii (strain DSM 16993 / JCM 10545 / NBRC 100140 / 7) (Sulfolobus tokodaii).